Consider the following 201-residue polypeptide: 3-isopropylmalate dehydratase small subunit (201 aa).

This sequence belongs to the LeuD family. LeuD type 1 subfamily. Heterodimer of LeuC and LeuD.

It carries out the reaction (2R,3S)-3-isopropylmalate = (2S)-2-isopropylmalate. Its pathway is amino-acid biosynthesis; L-leucine biosynthesis; L-leucine from 3-methyl-2-oxobutanoate: step 2/4. Catalyzes the isomerization between 2-isopropylmalate and 3-isopropylmalate, via the formation of 2-isopropylmaleate. This chain is 3-isopropylmalate dehydratase small subunit, found in Rhodopseudomonas palustris (strain HaA2).